We begin with the raw amino-acid sequence, 30 residues long: Cyclotide cter-F (30 aa).

Residues Gly-1 to Asp-30 constitute a cross-link (cyclopeptide (Gly-Asp)). Cystine bridges form between Cys-4-Cys-20, Cys-8-Cys-22, and Cys-13-Cys-27.

Contains 3 disulfide bonds. Post-translationally, this is a cyclic peptide.

In terms of biological role, probably participates in a plant defense mechanism. This Clitoria ternatea (Butterfly pea) protein is Cyclotide cter-F.